Reading from the N-terminus, the 1399-residue chain is DNA-directed RNA polymerase subunit beta' (1399 aa).

Zn(2+) contacts are provided by C71, C73, C86, and C89. The Mg(2+) site is built by D462, D464, and D466. Positions 810, 884, 891, and 894 each coordinate Zn(2+).

The protein belongs to the RNA polymerase beta' chain family. The RNAP catalytic core consists of 2 alpha, 1 beta, 1 beta' and 1 omega subunit. When a sigma factor is associated with the core the holoenzyme is formed, which can initiate transcription. Requires Mg(2+) as cofactor. Zn(2+) is required as a cofactor.

It carries out the reaction RNA(n) + a ribonucleoside 5'-triphosphate = RNA(n+1) + diphosphate. Functionally, DNA-dependent RNA polymerase catalyzes the transcription of DNA into RNA using the four ribonucleoside triphosphates as substrates. In Nitrobacter winogradskyi (strain ATCC 25391 / DSM 10237 / CIP 104748 / NCIMB 11846 / Nb-255), this protein is DNA-directed RNA polymerase subunit beta'.